The sequence spans 322 residues: Serine protease Lpg1137 (322 aa).

The active site involves Ser68.

The protein resides in the secreted. Its subcellular location is the host mitochondrion membrane. Its function is as follows. Serine protease effector that inhibits host cell autophagy by targeting SNX17. Localizes to the host endoplasmic reticulum-mitochondria contact site and catalyzes degradation of host SNX17, thereby impairing endoplasmic reticulum-mitochondria communication, leading to inhibit autophagy as well as staurosporine-induced apoptosis. In Legionella pneumophila subsp. pneumophila (strain Philadelphia 1 / ATCC 33152 / DSM 7513), this protein is Serine protease Lpg1137.